The primary structure comprises 258 residues: Tryptophan synthase alpha chain (258 aa).

Residues glutamate 47 and aspartate 58 each act as proton acceptor in the active site.

Belongs to the TrpA family. As to quaternary structure, tetramer of two alpha and two beta chains.

It carries out the reaction (1S,2R)-1-C-(indol-3-yl)glycerol 3-phosphate + L-serine = D-glyceraldehyde 3-phosphate + L-tryptophan + H2O. Its pathway is amino-acid biosynthesis; L-tryptophan biosynthesis; L-tryptophan from chorismate: step 5/5. Functionally, the alpha subunit is responsible for the aldol cleavage of indoleglycerol phosphate to indole and glyceraldehyde 3-phosphate. This Bacillus thuringiensis subsp. konkukian (strain 97-27) protein is Tryptophan synthase alpha chain.